A 304-amino-acid chain; its full sequence is Pseudouridine-5'-phosphate glycosidase (304 aa).

Glutamate 25 acts as the Proton donor in catalysis. Residues lysine 88 and valine 108 each coordinate substrate. Mn(2+) is bound at residue aspartate 140. Substrate is bound at residue 142–144; sequence SAD. The Nucleophile role is filled by lysine 161.

Belongs to the pseudouridine-5'-phosphate glycosidase family. In terms of assembly, homotrimer. Mn(2+) serves as cofactor.

It carries out the reaction D-ribose 5-phosphate + uracil = psi-UMP + H2O. Catalyzes the reversible cleavage of pseudouridine 5'-phosphate (PsiMP) to ribose 5-phosphate and uracil. Functions biologically in the cleavage direction, as part of a pseudouridine degradation pathway. This chain is Pseudouridine-5'-phosphate glycosidase, found in Paracoccus denitrificans (strain Pd 1222).